The following is a 346-amino-acid chain: Phosphoribosylformylglycinamidine cyclo-ligase (346 aa).

The protein belongs to the AIR synthase family.

The protein localises to the cytoplasm. The enzyme catalyses 2-formamido-N(1)-(5-O-phospho-beta-D-ribosyl)acetamidine + ATP = 5-amino-1-(5-phospho-beta-D-ribosyl)imidazole + ADP + phosphate + H(+). Its pathway is purine metabolism; IMP biosynthesis via de novo pathway; 5-amino-1-(5-phospho-D-ribosyl)imidazole from N(2)-formyl-N(1)-(5-phospho-D-ribosyl)glycinamide: step 2/2. This is Phosphoribosylformylglycinamidine cyclo-ligase from Synechococcus sp. (strain CC9311).